Here is a 557-residue protein sequence, read N- to C-terminus: Potassium-transporting ATPase potassium-binding subunit (557 aa).

The next 12 helical transmembrane spans lie at 5-25 (GFLL…PLGS), 63-83 (LSAI…MLLG), 132-152 (GLTV…FALI), 170-190 (LLRI…LFFI), 253-273 (FVQM…FGEV), 283-303 (LLWA…WAEV), 329-349 (VLVS…AVIA), 356-376 (ALGG…FGGV), 379-399 (GLYG…LMIG), 416-436 (LTAL…ALAM), 484-504 (LLAL…MAIA), and 526-546 (LFVG…FIPA).

This sequence belongs to the KdpA family. In terms of assembly, the system is composed of three essential subunits: KdpA, KdpB and KdpC.

Its subcellular location is the cell inner membrane. Part of the high-affinity ATP-driven potassium transport (or Kdp) system, which catalyzes the hydrolysis of ATP coupled with the electrogenic transport of potassium into the cytoplasm. This subunit binds the periplasmic potassium ions and delivers the ions to the membrane domain of KdpB through an intramembrane tunnel. This Escherichia coli O127:H6 (strain E2348/69 / EPEC) protein is Potassium-transporting ATPase potassium-binding subunit.